A 470-amino-acid polypeptide reads, in one-letter code: Cell division protein FtsP (470 aa).

A signal peptide (tat-type signal) is located at residues 1-27 (MSLSRRQFIQASGIALCAGAVPLKASA). A Plastocyanin-like domain is found at 68–164 (WGINGRYLGP…NGLAGMWLVE (97 aa)).

It belongs to the FtsP family. In terms of processing, exported by the Tat system. The position of the signal peptide cleavage has been experimentally proven. Can also be exported by the Sec system.

The protein localises to the periplasm. Its function is as follows. Cell division protein that is required for growth during stress conditions. May be involved in protecting or stabilizing the divisomal assembly under conditions of stress. In Escherichia coli (strain K12), this protein is Cell division protein FtsP.